Consider the following 331-residue polypeptide: MSSASLLWCHSGVSTVRFGERIFTLVAGDLLFAPEEAQVADDSQGLVLNIRFETLNIMGPARRIHLGHVWNDRLTFEYSRSLFGKETLSPDIARLFTDRVPTPPLPAPRKARAVAQVLVSNPADQTSLEEFAEIQGVSARTLQRQFLKSTGYSFSEWRAAQRVCVAASLLAHDFSISVVANLVGFAATSSLTRAFRRHTGATPSTFTTGQIGMGSAGHPPRIPATTTFAEAHQDQQLWIYSGTATVTTPGYCRFMGQGDMVTIPAGTQTRIDVAAGSIAFPVPVGLDEWGMDLTRVVAVNNQQPKPLTILEQSEWSKLSEELLNTPVPVQM.

Residues 112 to 209 enclose the HTH araC/xylS-type domain; sequence RAVAQVLVSN…GATPSTFTTG (98 aa). 2 consecutive DNA-binding regions (H-T-H motif) follow at residues 129-150 and 176-199; these read EEFAEIQGVSARTLQRQFLKST and ISVVANLVGFAATSSLTRAFRRHT.

In terms of biological role, under iron limitation, RipA negatively controls the expression of the acn (aconitase), catA (catechol 1,2 dioxygenase), leuCD (isopropylmalate dehydratase), narKGHJI (nitrite/nitrate transporter and nitrate reductase), sdhCAB (succinate dehydrogenase), pta (phosphotransacetylase) and katA (catalase) genes. Binds to the consensus sequence in the promoter region. The protein is HTH-type transcriptional regulator RipA of Corynebacterium glutamicum (strain ATCC 13032 / DSM 20300 / JCM 1318 / BCRC 11384 / CCUG 27702 / LMG 3730 / NBRC 12168 / NCIMB 10025 / NRRL B-2784 / 534).